The chain runs to 164 residues: DNA-directed RNA polymerase 19 kDa subunit (164 aa).

Acidic residues predominate over residues Met-1–Asp-35. Residues Met-1–Lys-39 form a disordered region.

It belongs to the poxviridae DNA-directed RNA polymerase 19 kDa subunit family. As to quaternary structure, the DNA-dependent RNA polymerase used for intermediate and late genes expression consists of eight subunits Rpo30/OPG66, Rpo7/OPG90, Rpo22/OPG103, Rpo147/OPG105, Rpo18/OPG119, Rpo19/OPG131, Rpo132/OPG151 and Rpo35/OPG156. The same holoenzyme, with the addition of the transcription-specificity factor OPG109, is used for early gene expression.

The protein localises to the virion. The enzyme catalyses RNA(n) + a ribonucleoside 5'-triphosphate = RNA(n+1) + diphosphate. Part of the DNA-dependent RNA polymerase which catalyzes the transcription of viral DNA into RNA using the four ribonucleoside triphosphates as substrates. Responsible for the transcription of early, intermediate and late genes. DNA-dependent RNA polymerase associates with the early transcription factor (ETF), itself composed of OPG118 and OPG133, thereby allowing the early genes transcription. Late transcription, and probably also intermediate transcription, require newly synthesized RNA polymerase. This is DNA-directed RNA polymerase 19 kDa subunit (OPG131) from Variola virus (isolate Human/India/Ind3/1967) (VARV).